A 184-amino-acid polypeptide reads, in one-letter code: Peptide deformylase (184 aa).

Positions 98 and 140 each coordinate Fe cation. E141 is an active-site residue. H144 contributes to the Fe cation binding site.

Belongs to the polypeptide deformylase family. Fe(2+) serves as cofactor.

The catalysed reaction is N-terminal N-formyl-L-methionyl-[peptide] + H2O = N-terminal L-methionyl-[peptide] + formate. In terms of biological role, removes the formyl group from the N-terminal Met of newly synthesized proteins. Requires at least a dipeptide for an efficient rate of reaction. N-terminal L-methionine is a prerequisite for activity but the enzyme has broad specificity at other positions. This chain is Peptide deformylase, found in Phocaeicola vulgatus (strain ATCC 8482 / DSM 1447 / JCM 5826 / CCUG 4940 / NBRC 14291 / NCTC 11154) (Bacteroides vulgatus).